The sequence spans 263 residues: TPR repeat-containing protein DDB_G0285095 (263 aa).

Residues 1 to 25 (MGCCGSKEKYNGEDVPKSQRLENRP) show a composition bias toward basic and acidic residues. The disordered stretch occupies residues 1-62 (MGCCGSKEKY…ASASQQNNPT (62 aa)). TPR repeat units lie at residues 87 to 120 (SDLL…DTDN), 121 to 154 (SRAW…AAPK), and 162 to 195 (SSLL…GARS).

This is TPR repeat-containing protein DDB_G0285095 from Dictyostelium discoideum (Social amoeba).